Here is a 317-residue protein sequence, read N- to C-terminus: MANLKDIRDRIKSVKNTRKITEAMRLVAAAKVRRAQEQVLRSRPFADRLSRILENLQSRMRFEEADAPLMEQRTVETITLVAITGDRGLCGGYNANIIKRTEQRFAELKGKGFNVKLVVIGSKAISYFSNRDYPIQAKITGLEQVPTADEANTIATDMLAEFMAAGTDRVEMVFTKFINLVSCKPVLQTLLPLDPQDIADPEDEIFNLTTDQGRLTVEPGTSSANTAPKIPSDIVFEQSPDQLLNALLPLYLQNQLLRCLQESAASELASRMTAMNNASDNAKELAKTLTLDYNKARQAAITQEILEVVGGSAAAGG.

It belongs to the ATPase gamma chain family. F-type ATPases have 2 components, CF(1) - the catalytic core - and CF(0) - the membrane proton channel. CF(1) has five subunits: alpha(3), beta(3), gamma(1), delta(1), epsilon(1). CF(0) has three main subunits: a, b and c.

Its subcellular location is the cellular thylakoid membrane. In terms of biological role, produces ATP from ADP in the presence of a proton gradient across the membrane. The gamma chain is believed to be important in regulating ATPase activity and the flow of protons through the CF(0) complex. This chain is ATP synthase gamma chain, found in Synechococcus sp. (strain CC9902).